Reading from the N-terminus, the 397-residue chain is 8-amino-7-oxononanoate synthase (397 aa).

Arg23 contributes to the substrate binding site. 110–111 is a binding site for pyridoxal 5'-phosphate; that stretch reads GY. His135 is a substrate binding site. 3 residues coordinate pyridoxal 5'-phosphate: Ser181, His209, and Thr237. At Lys240 the chain carries N6-(pyridoxal phosphate)lysine. Thr354 serves as a coordination point for substrate.

The protein belongs to the class-II pyridoxal-phosphate-dependent aminotransferase family. BioF subfamily. As to quaternary structure, homodimer. Pyridoxal 5'-phosphate is required as a cofactor.

It carries out the reaction 6-carboxyhexanoyl-[ACP] + L-alanine + H(+) = (8S)-8-amino-7-oxononanoate + holo-[ACP] + CO2. It functions in the pathway cofactor biosynthesis; biotin biosynthesis. In terms of biological role, catalyzes the decarboxylative condensation of pimeloyl-[acyl-carrier protein] and L-alanine to produce 8-amino-7-oxononanoate (AON), [acyl-carrier protein], and carbon dioxide. The polypeptide is 8-amino-7-oxononanoate synthase (Anaeromyxobacter sp. (strain Fw109-5)).